Reading from the N-terminus, the 397-residue chain is MRSTTLLALLALVLLYLVSGALVFQALEQPHEQQVQKDLEDGRDQFLKDHPCVSQKNLEGFIKLVAEALGGGANPETSWTNSSNHSSAWNLGSAFFFSGTIITTIGYGNIALHTDAGRLFCIFYALVGIPLFGMLLAGVGDRLGSSLRRGIGHIEAVFLKWHVPPGLVRMLSAVLFLLIGCLLFVLTPTFVFSYMESWSKLEAIYFVIVTLTTVGFGDYVPGDGTGQNSPAYQPLVWFWILFGLAYFASVLTTIGNWLRAVSRRTRAEMGGLTAQAASWTGTVTARVTQRTGPSAPPPEKEQPLLPSSLPAPPAVAEPAHRPGSPAPAEKVETPPPTASALDYPSENLAFIDESSDTQSERGCALPRAPRGRRRPNPTKKPSRPRGPGRLRDKAVPV.

Residues 1 to 3 (MRS) are Cytoplasmic-facing. The chain crosses the membrane as a helical span at residues 4–24 (TTLLALLALVLLYLVSGALVF). At 25–88 (QALEQPHEQQ…WTNSSNHSSA (64 aa)) the chain is on the extracellular side. Asn-81 carries an N-linked (GlcNAc...) asparagine glycan. The segment at residues 89 to 103 (WNLGSAFFFSGTIIT) is an intramembrane region (helical). The K(+) site is built by Thr-104, Ile-105, Gly-106, and Tyr-107. Residues 104 to 109 (TIGYGN) form a selectivity filter 1 region. The stretch at 104 to 110 (TIGYGNI) is an intramembrane region. The Extracellular portion of the chain corresponds to 111 to 118 (ALHTDAGR). Residues 119-151 (LFCIFYALVGIPLFGMLLAGVGDRLGSSLRRGI) traverse the membrane as a helical segment. The Cytoplasmic portion of the chain corresponds to 152 to 173 (GHIEAVFLKWHVPPGLVRMLSA). A helical membrane pass occupies residues 174–195 (VLFLLIGCLLFVLTPTFVFSYM). The Extracellular segment spans residues 196 to 200 (ESWSK). Positions 201–214 (LEAIYFVIVTLTTV) form an intramembrane region, helical. K(+) contacts are provided by Thr-213, Val-214, Gly-215, and Phe-216. The tract at residues 213 to 218 (TVGFGD) is selectivity filter 2. An intramembrane segment occupies 215–220 (GFGDYV). Over 221–234 (PGDGTGQNSPAYQP) the chain is Extracellular. The chain crosses the membrane as a helical span at residues 235-261 (LVWFWILFGLAYFASVLTTIGNWLRAV). Topologically, residues 262–397 (SRRTRAEMGG…GRLRDKAVPV (136 aa)) are cytoplasmic. A compositionally biased stretch (polar residues) spans 282–292 (TVTARVTQRTG). Positions 282-397 (TVTARVTQRT…GRLRDKAVPV (116 aa)) are disordered. Over residues 369–388 (PRGRRRPNPTKKPSRPRGPG) the composition is skewed to basic residues.

The protein belongs to the two pore domain potassium channel (TC 1.A.1.8) family. As to quaternary structure, homodimer; disulfide-linked. Forms heterodimers with other 2-pore domain K(+) channel subunits, such as KCNK2 and KCNK10. In terms of tissue distribution, detected in brain, and at much lower levels in liver, skeletal muscle and testis.

It localises to the cell membrane. The protein localises to the cell projection. It is found in the axon. The enzyme catalyses K(+)(in) = K(+)(out). It carries out the reaction Rb(+)(in) = Rb(+)(out). The catalysed reaction is Cs(+)(in) = Cs(+)(out). With respect to regulation, activated by various stimuli including intracellular basic pH, mechanical stretch and heat and polyunsaturated fatty acids such as arachidonic acid. K(+) channel that conducts voltage-dependent outward rectifying currents upon membrane depolarization. Voltage sensing is coupled to K(+) electrochemical gradient in an 'ion flux gating' mode where outward but not inward ion flow opens the gate. Converts to voltage-independent 'leak' conductance mode upon stimulation by various stimuli including mechanical membrane stretch, basic pH, heat and lipids. Homo- and heterodimerizes to form functional channels with distinct regulatory and gating properties. At trigeminal A-beta afferent nerves, the heterodimer of KCNK2/TREK-1 and KCNK4/TRAAK is mostly coexpressed at nodes of Ranvier where it conducts voltage-independent mechanosensitive and thermosensitive currents, allowing rapid action potential repolarization, high speed and high frequence saltatory conduction on myelinated nerves to ensure prompt sensory responses. Permeable to other monovalent cations such as Rb(+) and Cs(+). The polypeptide is Potassium channel subfamily K member 4 (Rattus norvegicus (Rat)).